The primary structure comprises 486 residues: L-carnitine:corrinoid methyltransferase (486 aa).

It belongs to the trimethylamine methyltransferase family. The L-carnitine:THF methyl transfer system is composed of two methyltransferases, MtcB and MtqA, and the corrinoid protein MtqC.

The catalysed reaction is Co(I)-[quaternary-amine-specific corrinoid protein] + (R)-carnitine + H(+) = (3R)-4-(dimethylamino)-3-hydroxybutanoate + methyl-Co(III)-[quaternary-amine-specific corrinoid protein]. Functionally, involved in the degradation of the quaternary amine L-carnitine. Component of a corrinoid-dependent methyltransferase system that transfers a methyl group from L-carnitine to tetrahydrofolate (THF), forming methyl-THF, a key intermediate in the Wood-Ljungdahl acetogenesis pathway. MtcB catalyzes the methylation of the corrinoid protein MtqC, using L-carnitine as the methyl donor. L-carnitine demethylation generates the unusual biological product norcarnitine, which is likely degraded by other members of the gut microbiota. In vitro, can methylate free cob(I)alamin. This chain is L-carnitine:corrinoid methyltransferase, found in Eubacterium limosum.